The following is a 269-amino-acid chain: Probable ribosomal RNA small subunit methyltransferase A (269 aa).

Residues histidine 23, leucine 25, glycine 50, glutamate 71, aspartate 95, and asparagine 110 each coordinate S-adenosyl-L-methionine.

This sequence belongs to the class I-like SAM-binding methyltransferase superfamily. rRNA adenine N(6)-methyltransferase family. RsmA subfamily.

The protein resides in the cytoplasm. Functionally, specifically dimethylates two adjacent adenosines in the loop of a conserved hairpin near the 3'-end of 16S rRNA in the 30S particle. May play a critical role in biogenesis of 30S subunits. The protein is Probable ribosomal RNA small subunit methyltransferase A of Pyrococcus abyssi (strain GE5 / Orsay).